The primary structure comprises 437 residues: MLDKNKQIWFIGIKGTGMASLALVLHDLGYNVAGSDIEKYTFTQVPLEKAGIEVKDFDPANIKSNDEQVIVKGNAFKQDNPEVAACLDKNVEWQSYPDTVEEIVQMHTSIGVSGTHGKTSTTSLLAHVLGEVAPTSYLIGDGRGKGVADSRFFVYEADEYRRHFLAYHPDYQIMTNIDFDHPDYFKDQDDYTSAFQTAADQTKKALFVWGDDKRLQSLKTDIPKYTYGFKDTDDFQAVNIEKTTTGSKFNVLAHGKDLGRFEIHLFGDHSILNTTAVIAVAYTEKVPMEDIKEGLLTFKGAKRRFAEKDFGDVSVIDDYAHHPTEMRATIQAARQKFPDKELVVVFQPHTFSRTKKYQKDFEEILRDVDKAYVTPIYASAREASGDISSEDLVNNIPGSEVIDLDNIADLTKHKNAVVVFMGAGDIPKYEDAYEKLL.

114–120 (GTHGKTS) is an ATP binding site.

Belongs to the MurCDEF family.

The protein localises to the cytoplasm. It catalyses the reaction UDP-N-acetyl-alpha-D-muramate + L-alanine + ATP = UDP-N-acetyl-alpha-D-muramoyl-L-alanine + ADP + phosphate + H(+). The protein operates within cell wall biogenesis; peptidoglycan biosynthesis. Cell wall formation. This chain is UDP-N-acetylmuramate--L-alanine ligase, found in Lactobacillus gasseri (strain ATCC 33323 / DSM 20243 / BCRC 14619 / CIP 102991 / JCM 1131 / KCTC 3163 / NCIMB 11718 / NCTC 13722 / AM63).